The primary structure comprises 174 residues: Protein C2-DOMAIN ABA-RELATED 6 (174 aa).

The 115-residue stretch at 1–115 (MEKTEEEVEM…HKLGLKELPH (115 aa)) folds into the C2 domain. Positions 30, 31, 36, 82, 83, 84, and 90 each coordinate Ca(2+).

This sequence belongs to the plant CAR protein family. In terms of assembly, binds to PYR/PYL/RCAR abscisic acid intracellular receptors in an ABA-independent manner, both at the plasma membrane and in the nucleus. Subunit of a complex made of CAR6, PHOT1 and RPT3/NPH3. Interacts directly with RPT3/NPH3.

It is found in the cell membrane. Its subcellular location is the nucleus. Functionally, stimulates the GTPase/ATPase activities of Obg-like ATPases. Mediates the transient calcium-dependent interaction of PYR/PYL/RCAR abscisic acid (ABA) receptors with the plasma membrane and thus regulates ABA sensitivity. Prevents hypocotyl bending as well as gravitropic response under blue light conditions. This is Protein C2-DOMAIN ABA-RELATED 6 from Arabidopsis thaliana (Mouse-ear cress).